Here is a 301-residue protein sequence, read N- to C-terminus: Porphobilinogen deaminase (301 aa).

An S-(dipyrrolylmethanemethyl)cysteine modification is found at Cys242.

This sequence belongs to the HMBS family. As to quaternary structure, monomer. It depends on dipyrromethane as a cofactor.

The enzyme catalyses 4 porphobilinogen + H2O = hydroxymethylbilane + 4 NH4(+). It functions in the pathway porphyrin-containing compound metabolism; protoporphyrin-IX biosynthesis; coproporphyrinogen-III from 5-aminolevulinate: step 2/4. Functionally, tetrapolymerization of the monopyrrole PBG into the hydroxymethylbilane pre-uroporphyrinogen in several discrete steps. This Rickettsia canadensis (strain McKiel) protein is Porphobilinogen deaminase.